The chain runs to 410 residues: Porin-like protein GalP (410 aa).

The N-terminal stretch at 1 to 25 (MKCRTLYPLVPTFALAASLPLQALA) is a signal peptide.

Belongs to the outer membrane porin (Opr) (TC 1.B.25) family.

Functionally, probable transporter, possibly involved in the gallate degradation pathway. May play a role in the uptake of low gallate concentrations that may exist in the natural habitats of P.putida. The polypeptide is Porin-like protein GalP (galP) (Pseudomonas putida (strain ATCC 47054 / DSM 6125 / CFBP 8728 / NCIMB 11950 / KT2440)).